The sequence spans 445 residues: GTPase Der (445 aa).

2 EngA-type G domains span residues 2–166 (FRVA…PEYE) and 182–355 (IKVA…NQAW). GTP contacts are provided by residues 8-15 (GIPNVGKS), 55-59 (DTGGY), 118-121 (NKID), 188-195 (GKPNAGKS), 235-239 (DTAGM), and 300-303 (NKID). The KH-like domain maps to 356 to 440 (KRVGTGQLNR…PIKLIFRGKE (85 aa)).

It belongs to the TRAFAC class TrmE-Era-EngA-EngB-Septin-like GTPase superfamily. EngA (Der) GTPase family. Associates with the 50S ribosomal subunit.

Functionally, GTPase that plays an essential role in the late steps of ribosome biogenesis. In Sulfurihydrogenibium sp. (strain YO3AOP1), this protein is GTPase Der.